A 523-amino-acid chain; its full sequence is Lysine-specific demethylase 4D (523 aa).

A JmjN domain is found at 18-60 (IMIFHPTKEEFNDFDKYIAYMESQGAHRAGLAKIIPPKEWKAR). 2 positions are modified to polyADP-ribosyl glutamic acid: E26 and E27. Y136 serves as a coordination point for 2-oxoglutarate. The region spanning 146–312 (DENTKQWNLG…YGKMASQCSC (167 aa)) is the JmjC domain. Fe cation contacts are provided by H192 and E194. Positions 202 and 210 each coordinate 2-oxoglutarate. Zn(2+) is bound by residues C238 and H244. Residue K245 coordinates 2-oxoglutarate. Fe cation is bound at residue H280. 2 residues coordinate Zn(2+): C310 and C312. Positions 407–523 (RRSAVSGTAT…ASGCSWAPVP (117 aa)) are disordered. Positions 428–440 (KPSSTPSSTPGPS) are enriched in low complexity. The segment covering 448 to 458 (NGRRGRGRPPQ) has biased composition (basic residues).

The protein belongs to the JHDM3 histone demethylase family. Fe(2+) is required as a cofactor. Ubiquitinated via 'Lys-63'-linked ubiquitin chains. Deubiquitinated by USP14 with the help of TRIM14 leading to stabilization.

It localises to the nucleus. The catalysed reaction is N(6),N(6),N(6)-trimethyl-L-lysyl(9)-[histone H3] + 2 2-oxoglutarate + 2 O2 = N(6)-methyl-L-lysyl(9)-[histone H3] + 2 formaldehyde + 2 succinate + 2 CO2. Functionally, histone demethylase that specifically demethylates 'Lys-9' of histone H3, thereby playing a central role in histone code. Does not demethylate histone H3 'Lys-4', H3 'Lys-27', H3 'Lys-36' nor H4 'Lys-20'. Demethylates both di- and trimethylated H3 'Lys-9' residue, while it has no activity on monomethylated residues. Demethylation of Lys residue generates formaldehyde and succinate. This chain is Lysine-specific demethylase 4D (KDM4D), found in Homo sapiens (Human).